We begin with the raw amino-acid sequence, 137 residues long: S-protein homolog 16 (137 aa).

An N-terminal signal peptide occupies residues 1–21 (MKNLLVFIFVFSLCMFDHVSG). N87 is a glycosylation site (N-linked (GlcNAc...) asparagine).

The protein belongs to the plant self-incompatibility (S1) protein family.

The protein resides in the secreted. This chain is S-protein homolog 16, found in Arabidopsis thaliana (Mouse-ear cress).